We begin with the raw amino-acid sequence, 1111 residues long: Serine/threonine-protein kinase Nek10 (1111 aa).

The segment covering Met-1–Asp-16 has biased composition (basic and acidic residues). Disordered regions lie at residues Met-1–Arg-24 and Ala-47–Arg-72. The span at Ala-47 to Thr-63 shows a compositional bias: polar residues. Residues Tyr-481–Lys-514 adopt a coiled-coil conformation. Positions Tyr-519–Leu-791 constitute a Protein kinase domain. Residues Leu-525–Val-533 and Lys-548 contribute to the ATP site. Catalysis depends on Asp-655, which acts as the Proton acceptor.

Belongs to the protein kinase superfamily. NEK Ser/Thr protein kinase family. NIMA subfamily. In terms of assembly, interacts with RAF1 and MAP2K1; the interaction is direct with RAF1 and required for ERK1/2-signaling pathway activation in response to UV irradiation. Mg(2+) serves as cofactor. In terms of tissue distribution, expressed in the mammary gland, lung, spleen, and kidney.

It carries out the reaction L-seryl-[protein] + ATP = O-phospho-L-seryl-[protein] + ADP + H(+). The enzyme catalyses L-threonyl-[protein] + ATP = O-phospho-L-threonyl-[protein] + ADP + H(+). Its function is as follows. Plays a role in the cellular response to UV irradiation. Mediates G2/M cell cycle arrest, MEK autoactivation and ERK1/2-signaling pathway activation in response to UV irradiation. In ciliated cells, it is involved in the regulation of mucociliary transport. The sequence is that of Serine/threonine-protein kinase Nek10 from Mus musculus (Mouse).